An 810-amino-acid chain; its full sequence is MTTFCRVLLIFGIYVAVCCAQSVEDDVFHFTNPSQGNAVWILDESSLPWTGGYQFLRSISGMPTTLLSVVDSSTGVTLGQCVAPQDATGNFSKRWERFSWELTASGLDCTFEHGAAIRVEFDRTQNPRTFSIRIQSITGPACLRDVVVQTEQATGCPPHLSRNSFTANALNCSCPFLDAANEDSEIENEDVDMLANTPQFPLFKGIDPSVLGSANPPTLPPSPCANHECHNNGTCLVSQEGAATCLCRNGFTGDRCELDVCSSVPCQNGGVCRSNNGIAYCECPPAFTGLLCESAHTDESVAPICRPECSNGQCVFKDGQAQCECRQGFTGANCNVLDVCLGDAACSMFGPLAKCVLDDNMDKMSSLTLINGTYDCLCPHPIHGQFVDCMQLHAPSATSVQPTEQVVINNVTPSFPVLEISKLPTGAPVTFTATSTTLMVTQPTVTVSPTHQVPSEPFVGFTVTRAPLRPLDIGSTTLPPPFNQHIITAGEPTWSSQQPHQPSEVPTQTTFIFPQTPETTTFAPTTGTQQPVHKFVSPSVPDENEEEEEEETTEETEETFPTPSTMQVATNGQFTTETAFVTSTIPSTTTDMEETDEDEDMTEEVTDSSTQPSTTVFVQPTTTFTTEAPTTTMEEEEEMTTDQVEDIESEEIATTTTQTSLPFWMTTTNKQVVPDSPTPMVIMPHPQPDEKMETSTEGVVDEESDEERTTVPESNEEVVTKNAEATTPSDITHHHTSSGKQSSAAASWIIAIIALIVLGLLLLATSLFILRYIRQSRKLHGKYNPAREEHNLSAAYAMPMSHIAKEERLI.

Residues 1-20 form the signal peptide; the sequence is MTTFCRVLLIFGIYVAVCCA. The Extracellular portion of the chain corresponds to 21–748; the sequence is QSVEDDVFHF…GKQSSAAASW (728 aa). N-linked (GlcNAc...) asparagine glycans are attached at residues asparagine 90, asparagine 171, and asparagine 232. 3 consecutive EGF-like domains span residues 220 to 257, 258 to 293, and 301 to 335; these read PPSP…DRCE, LDVC…LLCE, and VAPI…ANCN. Disulfide bonds link cysteine 224–cysteine 235, cysteine 229–cysteine 245, cysteine 247–cysteine 256, cysteine 261–cysteine 272, cysteine 266–cysteine 281, cysteine 283–cysteine 292, cysteine 305–cysteine 314, cysteine 309–cysteine 323, and cysteine 325–cysteine 334. A glycan (N-linked (GlcNAc...) asparagine) is linked at asparagine 371. The segment covering 522–531 has biased composition (low complexity); that stretch reads FAPTTGTQQP. Disordered regions lie at residues 522–567 and 684–738; these read FAPT…STMQ and PHPQ…HTSS. Residues 542–558 are compositionally biased toward acidic residues; the sequence is DENEEEEEEETTEETEE. The chain crosses the membrane as a helical span at residues 749 to 769; the sequence is IIAIIALIVLGLLLLATSLFI. Residues 770-810 are Cytoplasmic-facing; it reads LRYIRQSRKLHGKYNPAREEHNLSAAYAMPMSHIAKEERLI.

Highly expressed in the pharynx, circumpharyngeal cells, pharyngeal-intestinal valve and a subset of neurons in larval and embryonic stages. Also moderately expressed in the lining of the intestine, coelomocytes, labial process bundles and some hypodermal cells. In adults, it is predominantly expressed in the pharynx, the pharyngeal-intenstinal valve, some circumpharyngeal cells, m3, m4 and m6 pharyngeal muscles, and IL1, OLQ, BAG and ALN neurons. Weaker expression is observed in labial process bundles, coelomocytes, the ventral hypodermal ridge, the vulval hypodermis and the sensory rays of the adult male tail.

It is found in the membrane. Functionally, regulates pharyngeal pumping during feeding. This Caenorhabditis elegans protein is Abnormal pharyngeal pumping eat-20 (eat-20).